Reading from the N-terminus, the 310-residue chain is Glycine-rich RNA-binding protein RZ1C (310 aa).

The RRM domain occupies 7–85; the sequence is SRIFVGGLSP…RVISVNRAEP (79 aa). The residue at position 15 (serine 15) is a Phosphoserine. Residues 82-120 form a disordered region; the sequence is RAEPKLGRDDGESHGSRGGRDSGYSIAGKGSFGGGGGGG. Basic and acidic residues predominate over residues 83–101; that stretch reads AEPKLGRDDGESHGSRGGR. Over residues 111 to 120 the composition is skewed to gly residues; sequence GSFGGGGGGG. Residues 128-143 form a CCHC-type zinc finger; the sequence is CFKCGRVGHWARDCPS. A disordered region spans residues 224–310; the sequence is RFAGGDRYSR…YPSSSTFDRY (87 aa). Composition is skewed to basic and acidic residues over residues 226–236 and 244–253; these read AGGDRYSRGSD and DKARSFERDI. Gly residues predominate over residues 261 to 273; sequence RYGGGRAGGPIRG. Phosphoserine is present on serine 295.

In terms of tissue distribution, expressed in roots, rosette and cauline leaves, stems, floral buds and flowers.

The protein localises to the nucleus. Functionally, binds RNA and DNA sequences non-specifically. May be involved in tolerance to cold stress. This chain is Glycine-rich RNA-binding protein RZ1C, found in Arabidopsis thaliana (Mouse-ear cress).